Consider the following 141-residue polypeptide: Calcitonin (141 aa).

The first 25 residues, 1-25 (MGFQKFSPFLALSILVLLQAGSLHA), serve as a signal peptide directing secretion. A propeptide spanning residues 26 to 82 (APFRSALESSPADPATLSEDEARLLLAALVQDYVQMKASELEQEQEREGSSLDSPRS) is cleaved from the precursor. Phosphoserine is present on serine 43. Disordered stretches follow at residues 64–85 (SELE…SKRC) and 111–141 (IGVG…QNAN). A disulfide bond links cysteine 85 and cysteine 91. Position 116 is a proline amide (proline 116). The segment covering 118-132 (KKRDMSSDLERDHRP) has biased composition (basic and acidic residues).

The protein belongs to the calcitonin family.

It is found in the secreted. Functionally, calcitonin is a peptide hormone that causes a rapid but short-lived drop in the level of calcium and phosphate in blood by promoting the incorporation of those ions in the bones. Calcitonin function is mediated by the calcitonin receptor/CALCR and the CALCR-RAMP2 (AMYR2) receptor complex. Katacalcin is a potent plasma calcium-lowering peptide. In Homo sapiens (Human), this protein is Calcitonin.